The primary structure comprises 179 residues: Large ribosomal subunit protein uL5 (179 aa).

It belongs to the universal ribosomal protein uL5 family. As to quaternary structure, part of the 50S ribosomal subunit; part of the 5S rRNA/L5/L18/L25 subcomplex. Contacts the 5S rRNA and the P site tRNA. Forms a bridge to the 30S subunit in the 70S ribosome.

This is one of the proteins that bind and probably mediate the attachment of the 5S RNA into the large ribosomal subunit, where it forms part of the central protuberance. In the 70S ribosome it contacts protein S13 of the 30S subunit (bridge B1b), connecting the 2 subunits; this bridge is implicated in subunit movement. Contacts the P site tRNA; the 5S rRNA and some of its associated proteins might help stabilize positioning of ribosome-bound tRNAs. This chain is Large ribosomal subunit protein uL5, found in Photobacterium profundum (strain SS9).